A 124-amino-acid chain; its full sequence is UPF0102 protein TM1040_0449 (124 aa).

It belongs to the UPF0102 family.

This chain is UPF0102 protein TM1040_0449, found in Ruegeria sp. (strain TM1040) (Silicibacter sp.).